Here is a 65-residue protein sequence, read N- to C-terminus: VRDAYIAKPENCVYECATNEYCNKLCTDNGAESGYCQWVGRYGNACXCIKLPDRVPIRVWGKCHG.

The LCN-type CS-alpha/beta domain occupies 2–64 (RDAYIAKPEN…VPIRVWGKCH (63 aa)). Cystine bridges form between Cys12-Cys63, Cys16-Cys36, Cys22-Cys46, and Cys26-Cys48.

It belongs to the long (4 C-C) scorpion toxin superfamily. Sodium channel inhibitor family. Alpha subfamily. As to expression, expressed by the venom gland.

It is found in the secreted. Its function is as follows. Binds to sodium channels (Nav) and inhibits the inactivation of the activated channels, thereby blocking neuronal transmission. This is Neurotoxin BmK-M3 from Olivierus martensii (Manchurian scorpion).